The sequence spans 283 residues: Thymidylate synthase (283 aa).

Arginine 22 contributes to the dUMP binding site. The Nucleophile role is filled by cysteine 160. Residues 180–183 (RSCD), asparagine 191, and 221–223 (HIY) contribute to the dUMP site. Aspartate 183 lines the (6R)-5,10-methylene-5,6,7,8-tetrahydrofolate pocket. Serine 282 serves as a coordination point for (6R)-5,10-methylene-5,6,7,8-tetrahydrofolate.

The protein belongs to the thymidylate synthase family. Bacterial-type ThyA subfamily. In terms of assembly, homodimer.

The protein resides in the cytoplasm. The catalysed reaction is dUMP + (6R)-5,10-methylene-5,6,7,8-tetrahydrofolate = 7,8-dihydrofolate + dTMP. Its pathway is pyrimidine metabolism; dTTP biosynthesis. Its function is as follows. Catalyzes the reductive methylation of 2'-deoxyuridine-5'-monophosphate (dUMP) to 2'-deoxythymidine-5'-monophosphate (dTMP) while utilizing 5,10-methylenetetrahydrofolate (mTHF) as the methyl donor and reductant in the reaction, yielding dihydrofolate (DHF) as a by-product. This enzymatic reaction provides an intracellular de novo source of dTMP, an essential precursor for DNA biosynthesis. This chain is Thymidylate synthase, found in Tolumonas auensis (strain DSM 9187 / NBRC 110442 / TA 4).